We begin with the raw amino-acid sequence, 380 residues long: L-lactate dehydrogenase (380 aa).

Positions 1-380 constitute an FMN hydroxy acid dehydrogenase domain; it reads MIISSTTDFR…DRSILAKTDR (380 aa). Tyrosine 24 provides a ligand contact to substrate. The FMN site is built by serine 106 and glutamine 127. Residue tyrosine 129 coordinates substrate. Threonine 155 is a binding site for FMN. Residue arginine 164 coordinates substrate. Residue lysine 251 participates in FMN binding. Histidine 275 acts as the Proton acceptor in catalysis. Arginine 278 is a substrate binding site. 306 to 330 contacts FMN; that stretch reads DGGVRSGLDVVRMLALGAKGVLLGR.

It belongs to the FMN-dependent alpha-hydroxy acid dehydrogenase family. The cofactor is FMN.

The protein resides in the cell inner membrane. The catalysed reaction is (S)-lactate + A = pyruvate + AH2. Its function is as follows. Catalyzes the conversion of L-lactate to pyruvate. Is coupled to the respiratory chain. This is L-lactate dehydrogenase from Caulobacter sp. (strain K31).